We begin with the raw amino-acid sequence, 327 residues long: Phenylalanine--tRNA ligase alpha subunit (327 aa).

Glu-252 is a binding site for Mg(2+).

It belongs to the class-II aminoacyl-tRNA synthetase family. Phe-tRNA synthetase alpha subunit type 1 subfamily. In terms of assembly, tetramer of two alpha and two beta subunits. Mg(2+) is required as a cofactor.

It is found in the cytoplasm. It carries out the reaction tRNA(Phe) + L-phenylalanine + ATP = L-phenylalanyl-tRNA(Phe) + AMP + diphosphate + H(+). In Glaesserella parasuis serovar 5 (strain SH0165) (Haemophilus parasuis), this protein is Phenylalanine--tRNA ligase alpha subunit.